Consider the following 230-residue polypeptide: Probable carboxylesterase Culp2 (230 aa).

The tat-type signal signal peptide spans 1 to 32; the sequence is MNDLLTRRLLTMGAAAAMLAAVLLLTPITVPA. Residues C45 and C112 are joined by a disulfide bond. The active-site Nucleophile is S123. C185 and C192 are oxidised to a cystine. D189 is a catalytic residue. H207 (proton donor/acceptor) is an active-site residue.

It belongs to the cutinase family. Post-translationally, predicted to be exported by the Tat system. The position of the signal peptide cleavage has not been experimentally proven.

The protein localises to the secreted. The protein resides in the cell surface. The sequence is that of Probable carboxylesterase Culp2 (cut2) from Mycobacterium bovis (strain ATCC BAA-935 / AF2122/97).